The primary structure comprises 216 residues: Probable csgAB operon transcriptional regulatory protein (216 aa).

The HTH luxR-type domain maps to Asn-149–Leu-214. The segment at residues Asn-173–Tyr-192 is a DNA-binding region (H-T-H motif).

In terms of biological role, the master regulator for adhesive curli fimbriae expression; necessary for transcription of the csgAB operon. Plays a positive role in biofilm formation. The polypeptide is Probable csgAB operon transcriptional regulatory protein (Salmonella typhimurium (strain LT2 / SGSC1412 / ATCC 700720)).